A 115-amino-acid chain; its full sequence is U3-lycotoxin-Ls1b (115 aa).

Positions 1–20 are cleaved as a signal peptide; that stretch reads MKFVLLFGVLLVTLFSYSSA. The propeptide occupies 21 to 44; the sequence is EMLDDFDQADEDELLSLIEKEEAR. Intrachain disulfides connect Cys-48/Cys-63, Cys-55/Cys-72, Cys-62/Cys-87, and Cys-74/Cys-85.

This sequence belongs to the neurotoxin 19 (CSTX) family. 01 subfamily. As to expression, expressed by the venom gland.

Its subcellular location is the secreted. The sequence is that of U3-lycotoxin-Ls1b from Lycosa singoriensis (Wolf spider).